The sequence spans 100 residues: Large ribosomal subunit protein uL23 (100 aa).

This sequence belongs to the universal ribosomal protein uL23 family. Part of the 50S ribosomal subunit. Contacts protein L29, and trigger factor when it is bound to the ribosome.

One of the early assembly proteins it binds 23S rRNA. One of the proteins that surrounds the polypeptide exit tunnel on the outside of the ribosome. Forms the main docking site for trigger factor binding to the ribosome. This chain is Large ribosomal subunit protein uL23, found in Aeromonas salmonicida (strain A449).